The following is a 599-amino-acid chain: Translation initiation factor IF-2 (599 aa).

In terms of domain architecture, tr-type G spans 111–278 (PRPPIITVMG…SILLLAEILE (168 aa)). Residues 120–127 (GHVDHGKT) are G1. GTP is bound at residue 120 to 127 (GHVDHGKT). The tract at residues 145-149 (GITQH) is G2. The tract at residues 166–169 (DTPG) is G3. GTP is bound by residues 166–170 (DTPGH) and 220–223 (NKMD). Residues 220–223 (NKMD) form a G4 region. The interval 256–258 (SAL) is G5.

The protein belongs to the TRAFAC class translation factor GTPase superfamily. Classic translation factor GTPase family. IF-2 subfamily.

It is found in the cytoplasm. One of the essential components for the initiation of protein synthesis. Protects formylmethionyl-tRNA from spontaneous hydrolysis and promotes its binding to the 30S ribosomal subunits. Also involved in the hydrolysis of GTP during the formation of the 70S ribosomal complex. This is Translation initiation factor IF-2 from Mesomycoplasma hyopneumoniae (strain 7448) (Mycoplasma hyopneumoniae).